An 88-amino-acid chain; its full sequence is MLKLRLKRCGRKQRAVFRIVAIDVRSRREGKDLQKVGFYDPIKNQTYLNVTAILYFLEQGAQPTGTVQDIFKKAGVFKELRPNQMKFN.

This sequence belongs to the bacterial ribosomal protein bS16 family.

The protein resides in the plastid. It localises to the chloroplast. The chain is Small ribosomal subunit protein bS16c from Coffea arabica (Arabian coffee).